Here is a 154-residue protein sequence, read N- to C-terminus: SsrA-binding protein (154 aa).

This sequence belongs to the SmpB family.

The protein localises to the cytoplasm. In terms of biological role, required for rescue of stalled ribosomes mediated by trans-translation. Binds to transfer-messenger RNA (tmRNA), required for stable association of tmRNA with ribosomes. tmRNA and SmpB together mimic tRNA shape, replacing the anticodon stem-loop with SmpB. tmRNA is encoded by the ssrA gene; the 2 termini fold to resemble tRNA(Ala) and it encodes a 'tag peptide', a short internal open reading frame. During trans-translation Ala-aminoacylated tmRNA acts like a tRNA, entering the A-site of stalled ribosomes, displacing the stalled mRNA. The ribosome then switches to translate the ORF on the tmRNA; the nascent peptide is terminated with the 'tag peptide' encoded by the tmRNA and targeted for degradation. The ribosome is freed to recommence translation, which seems to be the essential function of trans-translation. The sequence is that of SsrA-binding protein from Treponema pallidum (strain Nichols).